A 100-amino-acid chain; its full sequence is Urease subunit gamma (100 aa).

It belongs to the urease gamma subunit family. As to quaternary structure, heterotrimer of UreA (gamma), UreB (beta) and UreC (alpha) subunits. Three heterotrimers associate to form the active enzyme.

The protein resides in the cytoplasm. The enzyme catalyses urea + 2 H2O + H(+) = hydrogencarbonate + 2 NH4(+). It functions in the pathway nitrogen metabolism; urea degradation; CO(2) and NH(3) from urea (urease route): step 1/1. This chain is Urease subunit gamma, found in Haemophilus influenzae (strain PittGG).